A 471-amino-acid chain; its full sequence is Chromosomal replication initiator protein DnaA (471 aa).

The domain I, interacts with DnaA modulators stretch occupies residues 1–77 (MELNSSFWTL…YTEISDTYGK (77 aa)). A domain II region spans residues 77 to 130 (KPFEVEFSITGNKINSHIETSTTPDEVLSGSEILQAQLARAQNIQPTQPRSSSD). The tract at residues 131-349 (TLNSELTFST…GNLKKVKMFS (219 aa)) is domain III, AAA+ region. The ATP site is built by Gly-176, Gly-178, Lys-179, and Thr-180. The domain IV, binds dsDNA stretch occupies residues 350-471 (ELQGLPIDHE…EQRIHNITRV (122 aa)).

It belongs to the DnaA family. Oligomerizes as a right-handed, spiral filament on DNA at oriC.

It is found in the cytoplasm. Plays an essential role in the initiation and regulation of chromosomal replication. ATP-DnaA binds to the origin of replication (oriC) to initiate formation of the DNA replication initiation complex once per cell cycle. Binds the DnaA box (a 9 base pair repeat at the origin) and separates the double-stranded (ds)DNA. Forms a right-handed helical filament on oriC DNA; dsDNA binds to the exterior of the filament while single-stranded (ss)DNA is stabiized in the filament's interior. The ATP-DnaA-oriC complex binds and stabilizes one strand of the AT-rich DNA unwinding element (DUE), permitting loading of DNA polymerase. After initiation quickly degrades to an ADP-DnaA complex that is not apt for DNA replication. Binds acidic phospholipids. The sequence is that of Chromosomal replication initiator protein DnaA from Bdellovibrio bacteriovorus (strain ATCC 15356 / DSM 50701 / NCIMB 9529 / HD100).